Here is a 68-residue protein sequence, read N- to C-terminus: Large ribosomal subunit protein uL29 (68 aa).

The protein belongs to the universal ribosomal protein uL29 family.

This Chlorobaculum tepidum (strain ATCC 49652 / DSM 12025 / NBRC 103806 / TLS) (Chlorobium tepidum) protein is Large ribosomal subunit protein uL29.